Here is a 411-residue protein sequence, read N- to C-terminus: Secretion apparatus protein BsaZ (411 aa).

The next 4 helical transmembrane spans lie at 28 to 48, 80 to 100, 137 to 157, and 175 to 195; these read IVAL…VDLT, IAAP…LVQS, ALLY…LYHA, and IVLT…VLIL. The disordered stretch occupies residues 341-411; that stretch reads AANRGGPPPE…APARTGDQNA (71 aa). Over residues 370–404 the composition is skewed to low complexity; sequence DACADNAFPDDAPPGAAAPNAGSPDGPAPDGGAPA.

It belongs to the type III secretion exporter family.

The protein localises to the cell membrane. Its function is as follows. Part of the bsa type III secretion system, is involved in the intracellular replication of invading bacteria inside the host cell. Probably necessary for the lysis of the vacuole membrane and escape into the host cell cytoplasm. This is Secretion apparatus protein BsaZ (bsaZ) from Burkholderia pseudomallei (strain 1710b).